The following is an 88-amino-acid chain: Small ribosomal subunit protein uS17 (88 aa).

Belongs to the universal ribosomal protein uS17 family. As to quaternary structure, part of the 30S ribosomal subunit.

In terms of biological role, one of the primary rRNA binding proteins, it binds specifically to the 5'-end of 16S ribosomal RNA. The protein is Small ribosomal subunit protein uS17 of Oleidesulfovibrio alaskensis (strain ATCC BAA-1058 / DSM 17464 / G20) (Desulfovibrio alaskensis).